A 370-amino-acid chain; its full sequence is D-alanine--D-alanine ligase (370 aa).

The ATP-grasp domain maps to lysine 142 to glutamine 348. Glutamine 172–valine 227 lines the ATP pocket. Aspartate 302, glutamate 315, and asparagine 317 together coordinate Mg(2+).

Belongs to the D-alanine--D-alanine ligase family. Mg(2+) is required as a cofactor. The cofactor is Mn(2+).

The protein resides in the cytoplasm. The enzyme catalyses 2 D-alanine + ATP = D-alanyl-D-alanine + ADP + phosphate + H(+). It participates in cell wall biogenesis; peptidoglycan biosynthesis. Cell wall formation. The polypeptide is D-alanine--D-alanine ligase (Lactiplantibacillus plantarum (strain ATCC BAA-793 / NCIMB 8826 / WCFS1) (Lactobacillus plantarum)).